The chain runs to 308 residues: Glycosyltransferase 6 domain-containing protein 1 (308 aa).

At 1–6 (MNSKRM) the chain is on the cytoplasmic side. Residues 7 to 23 (LLLVLFAFSLMLVERYF) traverse the membrane as a helical; Signal-anchor for type II membrane protein segment. The Lumenal portion of the chain corresponds to 24 to 308 (RNHQVEELRL…KVAHDSHRKL (285 aa)). Residue N74 is glycosylated (N-linked (GlcNAc...) asparagine). Residues 82 to 87 (FATGRF), 173 to 175 (AVN), and 195 to 198 (HAWW) each bind substrate. E263 serves as the catalytic Nucleophile.

Belongs to the glycosyltransferase 6 family. Mn(2+) is required as a cofactor.

It localises to the membrane. This is Glycosyltransferase 6 domain-containing protein 1 (GLT6D1) from Macaca fascicularis (Crab-eating macaque).